The primary structure comprises 428 residues: tRNA(Ile)-lysidine synthase (428 aa).

An ATP-binding site is contributed by Ser28 to Ser33.

The protein belongs to the tRNA(Ile)-lysidine synthase family.

The protein localises to the cytoplasm. The enzyme catalyses cytidine(34) in tRNA(Ile2) + L-lysine + ATP = lysidine(34) in tRNA(Ile2) + AMP + diphosphate + H(+). Functionally, ligates lysine onto the cytidine present at position 34 of the AUA codon-specific tRNA(Ile) that contains the anticodon CAU, in an ATP-dependent manner. Cytidine is converted to lysidine, thus changing the amino acid specificity of the tRNA from methionine to isoleucine. This Streptococcus pyogenes serotype M1 protein is tRNA(Ile)-lysidine synthase.